We begin with the raw amino-acid sequence, 659 residues long: MAAFSKYLTARNSSLAGAAFLLLCLLHKRRRALGLHGKKSGKPPLQNNEKEGKKERAVVDKVFFSRLIQILKIMVPRTFCKETGYLVLIAVMLVSRTYCDVWMIQNGTLIESGIIGRSRKDFKRYLLNFIAAMPLISLVNNFLKYGLNELKLCFRVRLTKYLYEEYLQAFTYYKMGNLDNRIANPDQLLTQDVEKFCNSVVDLYSNLSKPFLDIVLYIFKLTSAIGAQGPASMMAYLVVSGLFLTRLRRPIGKMTITEQKYEGEYRYVNSRLITNSEEIAFYNGNKREKQTVHSVFRKLVEHLHNFILFRFSMGFIDSIIAKYLATVVGYLVVSRPFLDLSHPRHLKSTHSELLEDYYQSGRMLLRMSQALGRIVLAGREMTRLAGFTARITELMQVLKDLNHGKYERTMVSQQEKGIEGVQVIPLIPGAGEIIIADNIIKFDHVPLATPNGDVLIRDLNFEVRSGANVLICGPNGCGKSSLFRVLGELWPLFGGRLTKPERGKLFYVPQRPYMTLGTLRDQVIYPDGREDQKRKGISDLVLKEYLDNVQLGHILEREGGWDSVQDWMDVLSGGEKQRMAMARLFYHKPQFAILDECTSAVSVDVEGYIYSHCRKVGITLFTVSHRKSLWKHHEYYLHMDGRGNYEFKQITEDTVEFGS.

The segment at 1–61 (MAAFSKYLTA…GKKERAVVDK (61 aa)) is interaction with PEX19. Residue N12 is glycosylated (N-linked (GlcNAc...) asparagine). K61 bears the N6-acetyllysine mark. Residues 84–104 (GYLVLIAVMLVSRTYCDVWMI) traverse the membrane as a helical segment. Positions 85–372 (YLVLIAVMLV…MLLRMSQALG (288 aa)) constitute an ABC transmembrane type-1 domain. The N-linked (GlcNAc...) asparagine glycan is linked to N106. The chain crosses the membrane as a helical span at residues 126–146 (LLNFIAAMPLISLVNNFLKYG). N-linked (GlcNAc...) asparagine glycosylation is present at N206. The helical transmembrane segment at 224 to 244 (AIGAQGPASMMAYLVVSGLFL) threads the bilayer. Residue K260 is modified to N6-acetyllysine. A helical membrane pass occupies residues 313-333 (MGFIDSIIAKYLATVVGYLVV). K399 carries the post-translational modification N6-acetyllysine. Residues 440-659 (IKFDHVPLAT…ITEDTVEFGS (220 aa)) enclose the ABC transporter domain. ATP is bound at residue 473–480 (GPNGCGKS). At K533 the chain carries N6-acetyllysine. S659 is subject to Phosphoserine.

It belongs to the ABC transporter superfamily. ABCD family. Peroxisomal fatty acyl CoA transporter (TC 3.A.1.203) subfamily. In terms of assembly, homodimers. Can form heterodimers with ABCD1 and ABCD2. Dimerization is necessary to form an active transporter. Interacts with PEX19; mediates the targeting of ABCD3 to peroxisomes. Post-translationally, ubiquitinated by PEX2 during pexophagy in response to starvation, leading to its degradation.

The protein localises to the peroxisome membrane. It carries out the reaction a very long-chain fatty acyl-CoA + H2O = a very long-chain fatty acid + CoA + H(+). The catalysed reaction is a very long-chain fatty acid(in) + ATP + H2O = a very long-chain fatty acid(out) + ADP + phosphate + H(+). The enzyme catalyses a long-chain fatty acyl-CoA + H2O = a long-chain fatty acid + CoA + H(+). It catalyses the reaction a long-chain fatty acid(in) + ATP + H2O = a long-chain fatty acid(out) + ADP + phosphate + H(+). It carries out the reaction pristanoyl-CoA + H2O = 2,6,10,14-tetramethylpentadecanoate + CoA + H(+). The catalysed reaction is 2,6,10,14-tetramethylpentadecanoate(in) + ATP + H2O = 2,6,10,14-tetramethylpentadecanoate(out) + ADP + phosphate + H(+). The enzyme catalyses hexadecanedioyl-CoA + H2O = hexadecanedioate + CoA + H(+). It catalyses the reaction hexadecanedioate(in) + ATP + H2O = hexadecanedioate(out) + ADP + phosphate + H(+). It carries out the reaction (5Z,8Z,11Z,14Z,17Z)-eicosapentaenoyl-CoA + H2O = (5Z,8Z,11Z,14Z,17Z)-eicosapentaenoate + CoA + H(+). The catalysed reaction is (5Z,8Z,11Z,14Z,17Z)-eicosapentaenoate(in) + ATP + H2O = (5Z,8Z,11Z,14Z,17Z)-eicosapentaenoate(out) + ADP + phosphate + H(+). The enzyme catalyses (4Z,7Z,10Z,13Z,16Z,19Z)-docosahexaenoyl-CoA + H2O = (4Z,7Z,10Z,13Z,16Z,19Z)-docosahexaenoate + CoA + H(+). It catalyses the reaction (4Z,7Z,10Z,13Z,16Z,19Z)-docosahexaenoate(in) + ATP + H2O = (4Z,7Z,10Z,13Z,16Z,19Z)-docosahexaenoate(out) + ADP + phosphate + H(+). Functionally, broad substrate specificity ATP-dependent transporter of the ATP-binding cassette (ABC) family that catalyzes the transport of long-chain fatty acids (LCFA)-CoA, dicarboxylic acids-CoA, long-branched-chain fatty acids-CoA and bile acids from the cytosol to the peroxisome lumen for beta-oxydation. Has fatty acyl-CoA thioesterase and ATPase activities. Probably hydrolyzes fatty acyl-CoAs into free fatty acids prior to their ATP-dependent transport into peroxisomes. Thus, play a role in regulation of LCFAs and energy metabolism namely, in the degradation and biosynthesis of fatty acids by beta-oxidation. This chain is ATP-binding cassette sub-family D member 3, found in Homo sapiens (Human).